The following is a 339-amino-acid chain: UDP-N-acetylenolpyruvoylglucosamine reductase (339 aa).

The FAD-binding PCMH-type domain maps to 19 to 189; sequence VDVQARLFAQ…LRVRFKLSRE (171 aa). The active site involves R166. Residue S239 is the Proton donor of the active site. E335 is an active-site residue.

This sequence belongs to the MurB family. It depends on FAD as a cofactor.

Its subcellular location is the cytoplasm. The catalysed reaction is UDP-N-acetyl-alpha-D-muramate + NADP(+) = UDP-N-acetyl-3-O-(1-carboxyvinyl)-alpha-D-glucosamine + NADPH + H(+). It functions in the pathway cell wall biogenesis; peptidoglycan biosynthesis. In terms of biological role, cell wall formation. The chain is UDP-N-acetylenolpyruvoylglucosamine reductase from Pseudomonas syringae pv. tomato (strain ATCC BAA-871 / DC3000).